Consider the following 254-residue polypeptide: Aspartate/glutamate leucyltransferase (254 aa).

This sequence belongs to the R-transferase family. Bpt subfamily.

It is found in the cytoplasm. It catalyses the reaction N-terminal L-glutamyl-[protein] + L-leucyl-tRNA(Leu) = N-terminal L-leucyl-L-glutamyl-[protein] + tRNA(Leu) + H(+). The enzyme catalyses N-terminal L-aspartyl-[protein] + L-leucyl-tRNA(Leu) = N-terminal L-leucyl-L-aspartyl-[protein] + tRNA(Leu) + H(+). In terms of biological role, functions in the N-end rule pathway of protein degradation where it conjugates Leu from its aminoacyl-tRNA to the N-termini of proteins containing an N-terminal aspartate or glutamate. In Xylella fastidiosa (strain 9a5c), this protein is Aspartate/glutamate leucyltransferase.